Here is a 183-residue protein sequence, read N- to C-terminus: Ribosome rescue factor SmrB (183 aa).

The Smr domain occupies 98–173 (LDLHGLTQLQ…GDAALLVLIE (76 aa)).

Belongs to the SmrB family. Associates with collided ribosomes, but not with correctly translating polysomes.

Acts as a ribosome collision sensor. Detects stalled/collided disomes (pairs of ribosomes where the leading ribosome is stalled and a second ribosome has collided with it) and endonucleolytically cleaves mRNA at the 5' boundary of the stalled ribosome. Stalled/collided disomes form a new interface (primarily via the 30S subunits) that binds SmrB. Cleaved mRNA becomes available for tmRNA ligation, leading to ribosomal subunit dissociation and rescue of stalled ribosomes. This is Ribosome rescue factor SmrB from Escherichia fergusonii (strain ATCC 35469 / DSM 13698 / CCUG 18766 / IAM 14443 / JCM 21226 / LMG 7866 / NBRC 102419 / NCTC 12128 / CDC 0568-73).